The sequence spans 334 residues: Ferredoxin--NADP reductase (334 aa).

FAD contacts are provided by aspartate 32, glutamine 40, tyrosine 45, valine 85, phenylalanine 120, aspartate 287, and threonine 327.

This sequence belongs to the ferredoxin--NADP reductase type 2 family. Homodimer. FAD serves as cofactor.

The catalysed reaction is 2 reduced [2Fe-2S]-[ferredoxin] + NADP(+) + H(+) = 2 oxidized [2Fe-2S]-[ferredoxin] + NADPH. This chain is Ferredoxin--NADP reductase, found in Wolbachia pipientis subsp. Culex pipiens (strain wPip).